A 307-amino-acid chain; its full sequence is Murein tetrapeptide carboxypeptidase (307 aa).

Ser-115 functions as the Nucleophile in the catalytic mechanism. Residues Glu-217 and His-285 each act as charge relay system in the active site.

This sequence belongs to the peptidase S66 family. Homodimer.

Its subcellular location is the cytoplasm. It catalyses the reaction N-acetyl-D-glucosaminyl-N-acetylmuramoyl-L-alanyl-meso-2,6-diaminoheptanedioyl-D-alanine + H2O = N-acetyl-D-glucosaminyl-N-acetylmuramoyl-L-alanyl-meso-2,6-diaminoheptanedioate + D-alanine. It functions in the pathway cell wall biogenesis; peptidoglycan recycling. In terms of biological role, releases the terminal D-alanine residue from the cytoplasmic disaccharide-tetrapeptide GlcNAc-MurNAc-L-Ala-gamma-D-Glu-meso-Dap-D-Ala, which is a murein turnover product. Probably also act on free tetrapetide. May be involved in murein recycling. This chain is Murein tetrapeptide carboxypeptidase, found in Pseudomonas aeruginosa (strain ATCC 15692 / DSM 22644 / CIP 104116 / JCM 14847 / LMG 12228 / 1C / PRS 101 / PAO1).